We begin with the raw amino-acid sequence, 1305 residues long: Contactin-associated protein-like 5 (1305 aa).

The N-terminal stretch at 1–22 is a signal peptide; that stretch reads MDSPALGAVALLLAGFWHLGLT. The F5/8 type C domain maps to 23–174; sequence ATNYNCDGAL…IGLRVEVFGC (152 aa). The Extracellular portion of the chain corresponds to 23 to 1236; sequence ATNYNCDGAL…PLTNAVRSDS (1214 aa). 2 consecutive Laminin G-like domains span residues 180–360 and 367–544; these read IADF…TFSC and PITF…IDLC. Intrachain disulfides connect C329–C360, C512–C544, C550–C561, C555–C570, and C572–C582. In terms of domain architecture, EGF-like 1 spans 546–583; that stretch reads IKDRCLPNYCEHGGKCSQSWTTFYCDCNDTSYMGATCH. Residues 584-790 form the Fibrinogen C-terminal domain; the sequence is NSIYEQSCEA…LHCYGDRQFW (207 aa). Positions 791–956 constitute a Laminin G-like 3 domain; that stretch reads NAASFNTEAS…KMTPGVKPGC (166 aa). 5 cysteine pairs are disulfide-bonded: C929/C956, C960/C973, C967/C982, C984/C994, and C1163/C1198. The 39-residue stretch at 957–995 folds into the EGF-like 2 domain; that stretch reads PGHCSSYGNLCHNGGKCVEKYNGYSCDCTSSAYEGPFCK. The 182-residue stretch at 1017–1198 folds into the Laminin G-like 4 domain; that stretch reads PVTKNASTSS…VKGSLTESSC (182 aa). The helical transmembrane segment at 1237-1257 threads the bilayer; the sequence is AVIGGVIAVVIFIIFCIIAIM. The Cytoplasmic segment spans residues 1258 to 1305; it reads SRFLYQHKQAHRSSQTKEKEYPENLESSFKADIDLQNTVSECKREYFI.

The protein belongs to the neurexin family. Expressed in brain.

Its subcellular location is the membrane. Its function is as follows. May play a role in the correct development and proper functioning of the peripheral and central nervous system and be involved in cell adhesion and intercellular communication. This chain is Contactin-associated protein-like 5 (CNTNAP5), found in Gallus gallus (Chicken).